An 86-amino-acid polypeptide reads, in one-letter code: Small ribosomal subunit protein bS20 (86 aa).

Belongs to the bacterial ribosomal protein bS20 family.

Functionally, binds directly to 16S ribosomal RNA. In Oceanobacillus iheyensis (strain DSM 14371 / CIP 107618 / JCM 11309 / KCTC 3954 / HTE831), this protein is Small ribosomal subunit protein bS20.